We begin with the raw amino-acid sequence, 185 residues long: Elongation factor P (185 aa).

It belongs to the elongation factor P family.

The protein localises to the cytoplasm. It functions in the pathway protein biosynthesis; polypeptide chain elongation. Involved in peptide bond synthesis. Stimulates efficient translation and peptide-bond synthesis on native or reconstituted 70S ribosomes in vitro. Probably functions indirectly by altering the affinity of the ribosome for aminoacyl-tRNA, thus increasing their reactivity as acceptors for peptidyl transferase. The protein is Elongation factor P of Nitratidesulfovibrio vulgaris (strain DP4) (Desulfovibrio vulgaris).